Here is a 473-residue protein sequence, read N- to C-terminus: tRNA modification GTPase MnmE (473 aa).

The (6S)-5-formyl-5,6,7,8-tetrahydrofolate site is built by arginine 28, glutamate 93, and arginine 132. Residues 228–394 (GVATVLVGSP…LKQQMSNMVA (167 aa)) form the TrmE-type G domain. Residues 238-243 (NAGKST), 257-263 (SHQPGTT), and 282-285 (DTAG) each bind GTP. Residues serine 242 and threonine 263 each contribute to the Mg(2+) site. Lysine 473 is a (6S)-5-formyl-5,6,7,8-tetrahydrofolate binding site.

Belongs to the TRAFAC class TrmE-Era-EngA-EngB-Septin-like GTPase superfamily. TrmE GTPase family. As to quaternary structure, homodimer. Heterotetramer of two MnmE and two MnmG subunits. Requires K(+) as cofactor.

Its subcellular location is the cytoplasm. Exhibits a very high intrinsic GTPase hydrolysis rate. Involved in the addition of a carboxymethylaminomethyl (cmnm) group at the wobble position (U34) of certain tRNAs, forming tRNA-cmnm(5)s(2)U34. This Chlorobium chlorochromatii (strain CaD3) protein is tRNA modification GTPase MnmE.